We begin with the raw amino-acid sequence, 338 residues long: Tetraacyldisaccharide 4'-kinase (338 aa).

49 to 56 (TVGGTGKT) is an ATP binding site.

Belongs to the LpxK family.

The enzyme catalyses a lipid A disaccharide + ATP = a lipid IVA + ADP + H(+). The protein operates within glycolipid biosynthesis; lipid IV(A) biosynthesis; lipid IV(A) from (3R)-3-hydroxytetradecanoyl-[acyl-carrier-protein] and UDP-N-acetyl-alpha-D-glucosamine: step 6/6. Its function is as follows. Transfers the gamma-phosphate of ATP to the 4'-position of a tetraacyldisaccharide 1-phosphate intermediate (termed DS-1-P) to form tetraacyldisaccharide 1,4'-bis-phosphate (lipid IVA). In Geobacter metallireducens (strain ATCC 53774 / DSM 7210 / GS-15), this protein is Tetraacyldisaccharide 4'-kinase.